Here is a 254-residue protein sequence, read N- to C-terminus: 5-oxoprolinase subunit A (254 aa).

The protein belongs to the LamB/PxpA family. In terms of assembly, forms a complex composed of PxpA, PxpB and PxpC.

It catalyses the reaction 5-oxo-L-proline + ATP + 2 H2O = L-glutamate + ADP + phosphate + H(+). Catalyzes the cleavage of 5-oxoproline to form L-glutamate coupled to the hydrolysis of ATP to ADP and inorganic phosphate. In Acinetobacter baumannii (strain ACICU), this protein is 5-oxoprolinase subunit A.